The sequence spans 2779 residues: Protein lava lamp (2779 aa).

Disordered stretches follow at residues 31-62 (LAGS…DSLK), 79-98 (ALRK…SMES), and 110-135 (KTRS…VSLL). Residues 33–51 (GSSNDLSSLQNVSASTTRG) are compositionally biased toward polar residues. Phosphoserine occurs at positions 34 and 35. The stretch at 52–85 (TKGKGRLDSLKENLYKQQERLTALKERALRKSQD) forms a coiled coil. The segment covering 79-91 (ALRKSQDERHKSS) has biased composition (basic and acidic residues). A phosphoserine mark is found at serine 95, serine 98, serine 122, and serine 133. The stretch at 141 to 175 (EKLLMLTQRTEQNRALLEQRKRDLAKSLLSVKSNI) forms a coiled coil. Phosphoserine occurs at positions 186, 352, and 354. 2 coiled-coil regions span residues 220 to 607 (ESRV…AESI) and 659 to 716 (GETL…KDLI). Residues 337 to 352 (ERQRNLELEQEQEKAS) are compositionally biased toward basic and acidic residues. Disordered regions lie at residues 337–366 (ERQR…DAQV), 622–662 (RPAS…GETL), 711–730 (REKD…QELS), and 1716–1753 (QAQL…GGDA). Composition is skewed to low complexity over residues 717–730 (SSTS…QELS) and 1716–1740 (QAQL…QSQQ). 3 coiled-coil regions span residues 751-1733 (LFEK…QHHH), 1785-1863 (TIED…KLIQ), and 1941-2433 (NEAP…QSQN). Disordered regions lie at residues 2348–2367 (EDKE…GETV), 2484–2507 (EEVT…EATS), 2552–2578 (NRGG…TANE), and 2633–2665 (TERS…AGSN). Low complexity predominate over residues 2488–2502 (QQQQRELPQSQQSTQ). Residues 2504–2544 (EATSDIMQKMQKALETQEMEIVTLKEQLAIRSAEYARLAAQ) adopt a coiled-coil conformation. A coiled-coil region spans residues 2600–2641 (DMRVEEMIVELVQLLEERDHLQLKLSDTLRQLETERSRVSDE). Residues 2643 to 2665 (SATASSSAASSSSPSKISSAGSN) show a composition bias toward low complexity.

In terms of assembly, interacts with CLIP-190 and spectrin separately.

Its subcellular location is the golgi apparatus. The protein localises to the cytoplasmic vesicle. It is found in the autophagosome. Its function is as follows. Lva and spectrin may form a Golgi-based scaffold that mediates interaction of Golgi bodies with microtubules and facilitates Golgi-derived membrane secretion required for the formation of furrows during cellularization. Under starvation conditions recruited by ema to developing autophagsosomes where it may function in autophagosome growth. The protein is Protein lava lamp (lva) of Drosophila melanogaster (Fruit fly).